The sequence spans 448 residues: Argininosuccinate synthase (448 aa).

ATP-binding positions include 17–25 and A43; that span reads AFSGGLDTS. Residue Y99 coordinates L-citrulline. ATP-binding residues include G129 and T131. L-aspartate contacts are provided by T131, N135, and D136. N135 contributes to the L-citrulline binding site. D136 is an ATP binding site. L-citrulline contacts are provided by R139 and S192. An ATP-binding site is contributed by D194. T201, E203, and E280 together coordinate L-citrulline.

This sequence belongs to the argininosuccinate synthase family. Type 2 subfamily. In terms of assembly, homotetramer.

It is found in the cytoplasm. It catalyses the reaction L-citrulline + L-aspartate + ATP = 2-(N(omega)-L-arginino)succinate + AMP + diphosphate + H(+). It participates in amino-acid biosynthesis; L-arginine biosynthesis; L-arginine from L-ornithine and carbamoyl phosphate: step 2/3. This is Argininosuccinate synthase from Pectobacterium carotovorum subsp. carotovorum (strain PC1).